The chain runs to 642 residues: Epithelial sodium channel subunit alpha (642 aa).

Over 1–81 the chain is Cytoplasmic; that stretch reads MHQVVTVKAE…VCSKRNKMKT (81 aa). The helical transmembrane segment at 82 to 102 threads the bilayer; it reads AFWSVLFFLTFGLMYWQFGIL. At 103 to 553 the chain is on the extracellular side; the sequence is YREYFSFPVN…NQWSLWFGSS (451 aa). 10 disulfides stabilise this stretch: Cys130/Cys297, Cys222/Cys229, Cys274/Cys281, Cys385/Cys470, Cys407/Cys447, Cys407/Cys466, Cys411/Cys462, Cys420/Cys447, Cys420/Cys470, and Cys422/Cys436. Residues 170–209 are disordered; the sequence is GAAQSSQKRSQRSLSHHVQRHPLRRRKRNEPVSLKGNSPP. The span at 178-197 shows a compositional bias: basic residues; it reads RSQRSLSHHVQRHPLRRRKR. A helical membrane pass occupies residues 554 to 574; it reads VLSVVELAELILDFIAITIIL. Topologically, residues 575–642 are cytoplasmic; that stretch reads SFKRFRSRQV…RDGEAVIGLE (68 aa). The interval 587–608 is disordered; the sequence is PSVPPPGAHDNTAFQSEPADPS.

Belongs to the amiloride-sensitive sodium channel (TC 1.A.6) family. SCNN1A subfamily. As to quaternary structure, heterotrimer; disulfide-linked and containing an alpha/SCNN1A, a beta/SCNN1B and a gamma/SCNN1G subunit.

The protein resides in the apical cell membrane. It localises to the cell projection. It is found in the cilium. Its subcellular location is the cytoplasmic granule. The protein localises to the cytoplasm. The protein resides in the cytoplasmic vesicle. It localises to the secretory vesicle. It is found in the acrosome. Its subcellular location is the flagellum. It carries out the reaction Na(+)(in) = Na(+)(out). Its activity is regulated as follows. Originally identified and characterized by its inhibition by the diuretic drug amiloride. This is one of the three pore-forming subunits of the heterotrimeric epithelial sodium channel (ENaC), a critical regulator of sodium balance and fluid homeostasis. ENaC operates in epithelial tissues, where it mediates the electrodiffusion of sodium ions from extracellular fluid through the apical membrane of cells, with water following osmotically. In Pelodiscus sinensis (Chinese softshell turtle), this protein is Epithelial sodium channel subunit alpha.